The chain runs to 480 residues: Adenosylhomocysteinase (480 aa).

Residues Thr63, Asp142, and Glu203 each coordinate substrate. Residue Thr204 to Thr206 coordinates NAD(+). Substrate contacts are provided by Lys233 and Asp237. Residues Asn238, Gly267–Gly272, Glu290, Asn325, Ile346–His348, and Asn394 each bind NAD(+).

The protein belongs to the adenosylhomocysteinase family. It depends on NAD(+) as a cofactor.

It is found in the cytoplasm. The catalysed reaction is S-adenosyl-L-homocysteine + H2O = L-homocysteine + adenosine. The protein operates within amino-acid biosynthesis; L-homocysteine biosynthesis; L-homocysteine from S-adenosyl-L-homocysteine: step 1/1. Functionally, may play a key role in the regulation of the intracellular concentration of adenosylhomocysteine. In Xylella fastidiosa (strain 9a5c), this protein is Adenosylhomocysteinase.